The primary structure comprises 307 residues: RHOMBOID-like protein 6, mitochondrial (307 aa).

The transit peptide at 1-62 directs the protein to the mitochondrion; it reads MRSRDMERGR…DCVAKLLRRF (62 aa). 6 consecutive transmembrane segments (helical) span residues 105-125, 136-156, 159-179, 191-211, 214-234, and 262-282; these read WLHA…IFGI, IGLI…LFLQ, ISVG…SELL, ALLS…LPWV, FAHI…LMQP, and LFFV…VMLF. Catalysis depends on Ser164, which acts as the Nucleophile. His216 (charge relay system) is an active-site residue.

Belongs to the peptidase S54 family.

Its subcellular location is the mitochondrion membrane. The catalysed reaction is Cleaves type-1 transmembrane domains using a catalytic dyad composed of serine and histidine that are contributed by different transmembrane domains.. Functionally, probable rhomboid-type serine protease that catalyzes intramembrane proteolysis. Might be involved in response to abiotic stimuli. In Arabidopsis thaliana (Mouse-ear cress), this protein is RHOMBOID-like protein 6, mitochondrial.